The following is a 628-amino-acid chain: MGCKMKQTAFEKSIDPASQKMLEKAENEGIETAWDRYEKQLPQCSFGQLGICCRNCNMGPCRIDPFGEGAEKGICGATADIIVARNLLRMIAAGAAAHSDHARDAVLTFKKMTEGEAGSYGIKDKTKLFSLASEYGISLEGKSHEEVAGELASALLAEFGKQEGPIQYTRRAPEARLRLWTSLGIEPRGVDREIVECMHRTHIGVDNDATHILLHGLRTSLSDGWGGSMIATEIQDVLFGTPEPKKSTVNLGVLSHDKVNVIIHGHEPILSEMIVQAAEDPELLELAKEKGAAGINVAGICCTGNETLMRHGTPIAGNFLQQELAVVTGAVEAMIVDVQCIMPALGNLTGCYHTKFISTSPKADFPGTVRMEFHEERAYDTAREIVRTAVENFPNRNIEKVNIPEEKQECMVGFSAEAILKALGGSPAPLIDAIAGGAVKGIGAVVGCNNVKVQHNYGHVNLVKELIKNNVLVVTTGCNAIACAEAGLLVPEAAAQAGDGLKGVCEALGIPPVLHMGSCVDISRILVLASAIAKSLGVDISDLPAAGAAPEWMSEKAVSIGAYVVSSGVFTVLGTVPPVLGSQAVTALLTKGLDNVIGASFAVEPDPFKAANLMLEHIEGKRKALGLN.

The [4Fe-4S] cluster site is built by Cys44, Cys52, Cys53, Cys56, Cys61, and Cys75. [Ni-4Fe-5S] cluster contacts are provided by His266, Cys302, Cys340, Cys448, Cys478, and Cys519.

This sequence belongs to the Ni-containing carbon monoxide dehydrogenase family. In terms of assembly, homodimer. [4Fe-4S] cluster is required as a cofactor. It depends on [Ni-4Fe-5S] cluster as a cofactor.

It carries out the reaction CO + 2 oxidized [2Fe-2S]-[ferredoxin] + H2O = 2 reduced [2Fe-2S]-[ferredoxin] + CO2 + 2 H(+). In terms of biological role, CODH oxidizes carbon monoxide coupled, via CooF, to the reduction of a hydrogen cation by a hydrogenase (possibly CooH). The sequence is that of Carbon monoxide dehydrogenase 1 (cooS1) from Methanosarcina mazei (strain ATCC BAA-159 / DSM 3647 / Goe1 / Go1 / JCM 11833 / OCM 88) (Methanosarcina frisia).